Here is a 527-residue protein sequence, read N- to C-terminus: Bifunctional purine biosynthesis protein PurH (527 aa).

Residues Met-9 to Thr-156 enclose the MGS-like domain.

The protein belongs to the PurH family.

It carries out the reaction (6R)-10-formyltetrahydrofolate + 5-amino-1-(5-phospho-beta-D-ribosyl)imidazole-4-carboxamide = 5-formamido-1-(5-phospho-D-ribosyl)imidazole-4-carboxamide + (6S)-5,6,7,8-tetrahydrofolate. The enzyme catalyses IMP + H2O = 5-formamido-1-(5-phospho-D-ribosyl)imidazole-4-carboxamide. It functions in the pathway purine metabolism; IMP biosynthesis via de novo pathway; 5-formamido-1-(5-phospho-D-ribosyl)imidazole-4-carboxamide from 5-amino-1-(5-phospho-D-ribosyl)imidazole-4-carboxamide (10-formyl THF route): step 1/1. The protein operates within purine metabolism; IMP biosynthesis via de novo pathway; IMP from 5-formamido-1-(5-phospho-D-ribosyl)imidazole-4-carboxamide: step 1/1. The polypeptide is Bifunctional purine biosynthesis protein PurH (Mycobacterium leprae (strain Br4923)).